The chain runs to 289 residues: F-box protein PP2-A11 (289 aa).

The 47-residue stretch at 23–69 folds into the F-box domain; sequence QPGLGDLPESCVALILQNLDPVEICRFSKLNTAFHGASWADFVWESK.

In terms of assembly, part of a SCF (ASK-cullin-F-box) protein ligase complex. Interacts with SKP1A/ASK1.

The protein resides in the nucleus. The protein operates within protein modification; protein ubiquitination. Its function is as follows. Component of SCF(ASK-cullin-F-box) E3 ubiquitin ligase complexes, which may mediate the ubiquitination and subsequent proteasomal degradation of target proteins. This chain is F-box protein PP2-A11 (PP2A11), found in Arabidopsis thaliana (Mouse-ear cress).